A 398-amino-acid polypeptide reads, in one-letter code: Cytochrome b (398 aa).

The helical transmembrane segment at 45–65 (LGSIAGIALVIQIITGVILAM) threads the bilayer. Heme b is bound by residues His-95 and His-109. A run of 9 helical transmembrane segments spans residues 96–116 (AVGA…GLYY), 129–149 (IGII…VLPW), 164–184 (FSAI…GFSV), 192–212 (FFAL…LHLV), 245–265 (FVGF…APNY), 277–297 (PLVT…YAIL), 304–324 (LGGV…PWLD), 339–359 (IAFW…SKPV), and 366–386 (ISRF…PLIG). The heme b site is built by His-196 and His-210.

The protein belongs to the cytochrome b family. The main subunits of complex b-c1 are: cytochrome b, cytochrome c1 and the Rieske protein. Heme b is required as a cofactor.

It localises to the cell membrane. Component of the ubiquinol-cytochrome c reductase complex (complex III or cytochrome b-c1 complex), which is a respiratory chain that generates an electrochemical potential coupled to ATP synthesis. In Rickettsia prowazekii (strain Madrid E), this protein is Cytochrome b (petB).